A 650-amino-acid polypeptide reads, in one-letter code: Laccase-like multicopper oxidase 1 (650 aa).

The signal sequence occupies residues 1-20; it reads MLLSKLSILLAKWLSVAVYA. Plastocyanin-like domains follow at residues 41-151, 162-360, and 439-595; these read QVPS…IVED, ERIL…LRYN, and KPVL…VVGD. C46 and C254 are oxidised to a cystine. Residues N55 and N83 are each glycosylated (N-linked (GlcNAc...) asparagine). Cu cation is bound by residues H87, H89, H133, and H135. Cu cation is bound by residues H501, H504, H506, H576, C577, H578, and H582. A glycan (N-linked (GlcNAc...) asparagine) is linked at N620.

It belongs to the multicopper oxidase family. In terms of assembly, monomer. Post-translationally, N-glycosylation Asn-55 and Asn-83 is involved in folding, conformational stability and laccase activity.

It catalyses the reaction 2 2',3,4-trihydroxy-trans-chalcone + O2 + 2 H(+) = 2 3',4'-dihydroxyaurone + 2 H2O. With respect to regulation, retains almost half of its activity in presence of high salt concentrations up to 100 mM NaCl. Retains also more than 85% of its original activity in the presence of 1 mM EDTA, indicating a satisfactory resistance towards chelators, which is rare among metal-containing enzyme. The activity drops significantly in the presence of NaN(3) or SDS. Appears more active in the presence of methanol compared to ethanol, but acetone or DMSO addition severely affect remaining laccase activity. Functionally, yellow laccase-like multicopper oxidase that is able to oxidize a variety of phenolic compounds including standard laccase substrates such as 2'-azino-bis(3-ethylbenzothiazoline-6-sulphonic acid) (ABTS) and 2,6-dimethoxyphenol (2,6-DMP). The existence of an ortho-hydroxy group is crucial for oxidation since pyrogallol and catechol, which contain ortho-hydroxy groups, are readily oxidized, which is not the case for resorcinol and hydroquinone, that contain meta- and para-hydroxy groups, respectively. The same is also true for the existence of a methoxy group in an ortho-position, since 2,6-DMP, guaiacol and ferulic and caffeic acids are also rather easily oxidized compared with the corresponding unsubstituted compound. Can be used for the bioconversion of 2',3,4-trihy-droxychalcone to 3',4'-dihydroxy-aurone, a bioactive aurone recently shown to possess inhibitory activity against several isoforms of the histone deacetylase complex (HDAC). The sequence is that of Laccase-like multicopper oxidase 1 from Thermothelomyces thermophilus (strain ATCC 42464 / BCRC 31852 / DSM 1799) (Sporotrichum thermophile).